A 542-amino-acid polypeptide reads, in one-letter code: Probable folate-biopterin transporter 8, chloroplastic (542 aa).

The N-terminal 78 residues, 1–78 (MERIMINPLL…GVSEFEETAR (78 aa)), are a transit peptide targeting the chloroplast. The segment at 24–45 (LSSIHRQQQQQERQSNNNTLFM) is disordered. 12 consecutive transmembrane segments (helical) span residues 103 to 123 (FPWL…PSTL), 132 to 152 (LPMV…IGSG), 155 to 175 (VPYI…MGIF), 181 to 201 (VLPS…ITEV), 223 to 243 (ALMA…YLLL), 246 to 266 (PPKI…VVSL), 308 to 328 (LIWA…VFCY), 338 to 358 (SVIG…TVVY), 369 to 389 (PLIH…YILV), 404 to 424 (VLCF…PFAV), 446 to 466 (LCLS…LIGI), and 477 to 497 (GILI…LVPM). Residues 506–542 (GKRGISKRSRRNRRVGRVVDKESVTYRRERESEEAQR) are disordered. Positions 509 to 521 (GISKRSRRNRRVG) are enriched in basic residues. Over residues 522-542 (RVVDKESVTYRRERESEEAQR) the composition is skewed to basic and acidic residues.

It belongs to the major facilitator superfamily. Folate-biopterin transporter (TC 2.A.71) family.

It is found in the plastid. The protein resides in the chloroplast membrane. Its function is as follows. Could mediate folate transport. This Arabidopsis thaliana (Mouse-ear cress) protein is Probable folate-biopterin transporter 8, chloroplastic.